Here is a 427-residue protein sequence, read N- to C-terminus: Tol-Pal system protein TolB (427 aa).

The N-terminal stretch at 1-23 (MKLLKRLVSVFAIVLAVGSNAFA) is a signal peptide.

The protein belongs to the TolB family. In terms of assembly, the Tol-Pal system is composed of five core proteins: the inner membrane proteins TolA, TolQ and TolR, the periplasmic protein TolB and the outer membrane protein Pal. They form a network linking the inner and outer membranes and the peptidoglycan layer.

The protein resides in the periplasm. Functionally, part of the Tol-Pal system, which plays a role in outer membrane invagination during cell division and is important for maintaining outer membrane integrity. The protein is Tol-Pal system protein TolB of Haemophilus influenzae (strain 86-028NP).